The sequence spans 517 residues: Pentatricopeptide repeat-containing protein At1g77360, mitochondrial (517 aa).

The transit peptide at 1–59 directs the protein to the mitochondrion; the sequence is MKRFRIRSVDFRQLVNFFSFMRWECSSSATVWVRFNMTIRIINRQSRFCCKSFLSARLY. PPR repeat units lie at residues 133 to 163, 167 to 201, 202 to 232, 236 to 270, 271 to 305, 306 to 340, 341 to 375, 376 to 406, 410 to 444, and 445 to 479; these read SVRA…MRKK, NVET…DLPP, NLVA…MRDR, DSKT…GCHP, DIVT…ICKP, TTFI…GMKA, DVAV…GVTP, NSKS…MIKV, DADT…GVFP, and SMHT…GIRP.

The protein belongs to the PPR family. P subfamily.

Its subcellular location is the mitochondrion. This is Pentatricopeptide repeat-containing protein At1g77360, mitochondrial from Arabidopsis thaliana (Mouse-ear cress).